A 499-amino-acid chain; its full sequence is Guanosine-5'-triphosphate,3'-diphosphate pyrophosphatase (499 aa).

The protein belongs to the GppA/Ppx family. GppA subfamily.

It carries out the reaction guanosine 3'-diphosphate 5'-triphosphate + H2O = guanosine 3',5'-bis(diphosphate) + phosphate + H(+). It participates in purine metabolism; ppGpp biosynthesis; ppGpp from GTP: step 2/2. Catalyzes the conversion of pppGpp to ppGpp. Guanosine pentaphosphate (pppGpp) is a cytoplasmic signaling molecule which together with ppGpp controls the 'stringent response', an adaptive process that allows bacteria to respond to amino acid starvation, resulting in the coordinated regulation of numerous cellular activities. This Klebsiella pneumoniae (strain 342) protein is Guanosine-5'-triphosphate,3'-diphosphate pyrophosphatase.